The sequence spans 158 residues: 6,7-dimethyl-8-ribityllumazine synthase (158 aa).

Residues Phe22, 57 to 59, and 81 to 83 contribute to the 5-amino-6-(D-ribitylamino)uracil site; these read AVE and AVI. Residue 86 to 87 participates in (2S)-2-hydroxy-3-oxobutyl phosphate binding; the sequence is GT. The Proton donor role is filled by His89. A 5-amino-6-(D-ribitylamino)uracil-binding site is contributed by Phe114. Position 128 (Arg128) interacts with (2S)-2-hydroxy-3-oxobutyl phosphate.

It belongs to the DMRL synthase family. Forms an icosahedral capsid composed of 60 subunits, arranged as a dodecamer of pentamers.

The enzyme catalyses (2S)-2-hydroxy-3-oxobutyl phosphate + 5-amino-6-(D-ribitylamino)uracil = 6,7-dimethyl-8-(1-D-ribityl)lumazine + phosphate + 2 H2O + H(+). It functions in the pathway cofactor biosynthesis; riboflavin biosynthesis; riboflavin from 2-hydroxy-3-oxobutyl phosphate and 5-amino-6-(D-ribitylamino)uracil: step 1/2. Its function is as follows. Catalyzes the formation of 6,7-dimethyl-8-ribityllumazine by condensation of 5-amino-6-(D-ribitylamino)uracil with 3,4-dihydroxy-2-butanone 4-phosphate. This is the penultimate step in the biosynthesis of riboflavin. The protein is 6,7-dimethyl-8-ribityllumazine synthase of Shewanella frigidimarina (strain NCIMB 400).